The following is a 474-amino-acid chain: Transcription factor SOX-4 (474 aa).

Residues 1-10 (MVQQTNNAEN) are compositionally biased toward polar residues. Positions 1-58 (MVQQTNNAENTEALLAGESSDSGAGLELGIASSPTPGSTASTGGKADDPSWCKTPSGH) are disordered. A compositionally biased stretch (low complexity) spans 31-44 (ASSPTPGSTASTGG). Residues 59–127 (IKRPMNAFMV…KHMADYPDYK (69 aa)) constitute a DNA-binding region (HMG box). At K95 the chain carries N6-acetyllysine. Disordered stretches follow at residues 128-228 (YRPR…GGGK), 262-286 (ARTP…APGK), and 302-416 (LGTS…NFES). Residues 138–149 (NANSSSSAAASS) show a composition bias toward low complexity. The segment covering 158 to 189 (VGGSGGGGHGGGGGGGSSNAGGGGGGASGGGA) has biased composition (gly residues). Low complexity-rich tracts occupy residues 266 to 283 (SASA…ALAA), 304 to 320 (TSSS…DPSD), 336 to 354 (APSL…AGRS), and 366 to 396 (AASP…GSSS). Positions 397 to 406 (SDDEFEDDLL) are enriched in acidic residues. Low complexity predominate over residues 407 to 416 (DLNPSSNFES). Residues 426–434 (SALDRDLDF) carry the 9aaTAD motif.

Interacts with UBE2I. Interacts with HDAC1; interaction inhibits the transcriptional activator activity. Acetylation at Lys-95 by KAT5 promotes the transcription activator activity and is required during myoblast differentiation. Acetylation by KAT5 abolishes the interaction between SOX4 and HDAC1 and switches SOX4 into a transcriptional activator. As to expression, testis, brain, and heart.

The protein resides in the nucleus. Functionally, transcriptional activator that binds with high affinity to the T-cell enhancer motif 5'-AACAAAG-3' motif. Required for IL17A-producing Vgamma2-positive gamma-delta T-cell maturation and development, via binding to regulator loci of RORC to modulate expression. Involved in skeletal myoblast differentiation by promoting gene expression of CALD1. In Homo sapiens (Human), this protein is Transcription factor SOX-4.